The sequence spans 464 residues: Formin-like protein 19 (464 aa).

The interval M1 to T74 is disordered. The span at P14–R70 shows a compositional bias: pro residues. Positions C68–K462 constitute an FH2 domain.

The protein belongs to the formin-like family. Class-II subfamily.

The sequence is that of Formin-like protein 19 (FH19) from Arabidopsis thaliana (Mouse-ear cress).